The sequence spans 161 residues: PHD finger-containing protein 4 (161 aa).

The PHD-type zinc-finger motif lies at 30–80 (KKPCEVCGSNANDHAIMTCFLCRDTREHIYCARVHLRSVPRMWICEECRMN). Cys-33, Cys-36, Cys-48, Cys-51, His-57, Cys-60, Cys-74, and Cys-77 together coordinate Zn(2+). Residues 114–132 (TMTSSDSGNQISATHQQPP) show a composition bias toward polar residues. Residues 114-161 (TMTSSDSGNQISATHQQPPQAHASPVAVPMDTSSSDNQQPPSDSESAI) are disordered. The span at 146–161 (SSSDNQQPPSDSESAI) shows a compositional bias: low complexity.

Interacts directly with AIPP3/BDT1.

Functionally, together with AIPP3/BDT1, cooperates to form a BAH-PHD bivalent histone reader complex able to read histone H3 lysine 27 trimethylation (H3K27me3) histone marks in order to regulate transcription, especially to prevent early flowering; promotes AIPP3/BDT1 binding to H3K27me3. This Arabidopsis thaliana (Mouse-ear cress) protein is PHD finger-containing protein 4.